The sequence spans 141 residues: Large ribosomal subunit protein uL11 (141 aa).

It belongs to the universal ribosomal protein uL11 family. As to quaternary structure, part of the ribosomal stalk of the 50S ribosomal subunit. Interacts with L10 and the large rRNA to form the base of the stalk. L10 forms an elongated spine to which L12 dimers bind in a sequential fashion forming a multimeric L10(L12)X complex. One or more lysine residues are methylated.

Its function is as follows. Forms part of the ribosomal stalk which helps the ribosome interact with GTP-bound translation factors. The chain is Large ribosomal subunit protein uL11 from Aster yellows witches'-broom phytoplasma (strain AYWB).